Here is a 535-residue protein sequence, read N- to C-terminus: Bifunctional purine biosynthesis protein PurH (535 aa).

Residues 1-145 (MAQTALISVS…KNWKDVGVLT (145 aa)) enclose the MGS-like domain.

The protein belongs to the PurH family.

The enzyme catalyses (6R)-10-formyltetrahydrofolate + 5-amino-1-(5-phospho-beta-D-ribosyl)imidazole-4-carboxamide = 5-formamido-1-(5-phospho-D-ribosyl)imidazole-4-carboxamide + (6S)-5,6,7,8-tetrahydrofolate. The catalysed reaction is IMP + H2O = 5-formamido-1-(5-phospho-D-ribosyl)imidazole-4-carboxamide. It participates in purine metabolism; IMP biosynthesis via de novo pathway; 5-formamido-1-(5-phospho-D-ribosyl)imidazole-4-carboxamide from 5-amino-1-(5-phospho-D-ribosyl)imidazole-4-carboxamide (10-formyl THF route): step 1/1. Its pathway is purine metabolism; IMP biosynthesis via de novo pathway; IMP from 5-formamido-1-(5-phospho-D-ribosyl)imidazole-4-carboxamide: step 1/1. The chain is Bifunctional purine biosynthesis protein PurH from Variovorax paradoxus (strain S110).